A 298-amino-acid chain; its full sequence is Glyoxalase domain-containing protein 4 (298 aa).

Positions 5 to 130 constitute a VOC 1 domain; that stretch reads RALHFVFKVK…GGYKFYLQDR (126 aa). At lysine 109 the chain carries N6-succinyllysine. Serine 131 bears the Phosphoserine mark. The VOC 2 domain occupies 137–258; the sequence is PVLKVTLAVS…DGHEICFVGD (122 aa). Lysine 273 carries the N6-succinyllysine modification.

Belongs to the glyoxalase I family. In terms of assembly, interacts with NUDT9.

It is found in the mitochondrion. The sequence is that of Glyoxalase domain-containing protein 4 (Glod4) from Mus musculus (Mouse).